A 602-amino-acid chain; its full sequence is UvrABC system protein C (602 aa).

Positions 19–97 (EEPGVYRMIG…IKSLAPRYNI (79 aa)) constitute a GIY-YIG domain. The UVR domain maps to 206 to 241 (SEVIDDLTARMHAAAERLAFEEAAACRDQVRVLQAV).

Belongs to the UvrC family. In terms of assembly, interacts with UvrB in an incision complex.

Its subcellular location is the cytoplasm. The UvrABC repair system catalyzes the recognition and processing of DNA lesions. UvrC both incises the 5' and 3' sides of the lesion. The N-terminal half is responsible for the 3' incision and the C-terminal half is responsible for the 5' incision. This Aromatoleum aromaticum (strain DSM 19018 / LMG 30748 / EbN1) (Azoarcus sp. (strain EbN1)) protein is UvrABC system protein C.